The sequence spans 278 residues: Envelope glycoprotein L (278 aa).

A signal peptide spans 1–30 (MCRRPDCGFSFSPGPVILLWCCLLLPIVSS). Positions 43 to 256 (VPAECPELTR…DKYYAGLPPE (214 aa)) constitute a gL betaherpesvirus-type domain. A disulfide bond links Cys154 and Cys159.

This sequence belongs to the herpesviridae glycoprotein L (gL) family. Betaherpesvirinae gL subfamily. As to quaternary structure, interacts with glycoprotein H (gH); this interaction is necessary for the correct processing and cell surface expression of gH. Forms the envelope pentamer complex (PC) composed of gH, gL, UL128, UL130, and UL131A. The pentamer interacts with host NRP2. Forms the envelope trimer complex composed of gH, gL, and gO. The trimer interacts with host PDGFRA. The trimer also interacts with host EPHA2.

Its subcellular location is the virion membrane. The protein localises to the host cell membrane. It is found in the host Golgi apparatus. The protein resides in the host trans-Golgi network. The heterodimer glycoprotein H-glycoprotein L is required for the fusion of viral and plasma membranes leading to virus entry into the host cell. Acts as a functional inhibitor of gH and maintains gH in an inhibited form. Upon binding to host integrins, gL dissociates from gH leading to activation of the viral fusion glycoproteins gB and gH. In human cytomegalovirus, forms two distincts complexes to mediate viral entry, a trimer and a pentamer at the surface of the virion envelope. The gH-gL-gO trimer is required for infection in fibroblasts by interacting with host PDGFRA, and in glioblastoma cells by interacting with host EPHA2. The gH-gL-UL128-UL130-UL131A pentamer is essential for viral entry in epithelial, endothelial and myeloid cells via interaction with host NRP2. This is Envelope glycoprotein L from Human cytomegalovirus (strain 5035) (HHV-5).